The primary structure comprises 149 residues: Immunoglobulin kappa chain variable 6-17 (149 aa).

The signal sequence occupies residues 1–29 (MHHTSMGIKMESQIQVFVFVFLWLSGVDG). Repeats lie at residues 26-35 (GVDGDIVMTQ) and 38-47 (GVDGDIVMTQ). Residues 42–64 (DIVMTQSHKFMSTSVGDRVSITC) form a framework-1 region. Residues 65-75 (KASQDVSTTVA) are complementarity-determining-1. The interval 76–90 (WYQQKPGQSPKLLIY) is framework-2. The complementarity-determining-2 stretch occupies residues 91 to 97 (SASYRYT). The segment at 98–129 (GVPDRFTGSGSGTDFTFTISSVQAEDLAVYYC) is framework-3. Residues 130–138 (QQHYSTPPT) are complementarity-determining-3. The interval 139–148 (FGGGTKLEIK) is framework-4.

The chain is Immunoglobulin kappa chain variable 6-17 from Mus musculus (Mouse).